The following is a 259-amino-acid chain: Truncated Ankyrin repeat protein OPG003 (259 aa).

It belongs to the orthopoxvirus OPG003 family.

The protein is Truncated Ankyrin repeat protein OPG003 (OPG003) of Vaccinia virus (strain Copenhagen) (VACV).